A 1114-amino-acid chain; its full sequence is M-phase phosphoprotein 9 (1114 aa).

5 disordered regions span residues 1–55 (MEDF…KTGP), 106–161 (RPSC…DCHV), 183–207 (AKEPTEPLEPGAASQGQHPASVVQA), 267–301 (TSWAQRLKQNQSKQAHTEDDCSGPKPGSELNWKPP), and 410–468 (VLEP…STIP). Over residues 24-51 (APQSLGLSLHANRSSPHLSTNGVSSFSG) the composition is skewed to polar residues. The segment covering 106 to 119 (RPSCSSSSVSEQVS) has biased composition (low complexity). Positions 149–161 (QPASSTSYPDCHV) are enriched in polar residues. Polar residues-rich tracts occupy residues 267 to 280 (TSWAQRLKQNQSKQ) and 429 to 446 (HNPSQVSGFSKYPSTTRA). Residues 368-729 (LSQVLTLDPG…EAQVKQAEHE (362 aa)) form a required for its centrosomal localization region. Residues 382–431 (KPKEHVAGIQAHGFLHALDDRISFSPDSVLEPSLSRHSDTDSSSQASHNP) are interaction with CEP97. A coiled-coil region spans residues 574 to 733 (DRCGQLDSAL…KQAEHESMLS (160 aa)). A Phosphoserine; by TTBK2 modification is found at Ser710. Residue Lys713 forms a Glycyl lysine isopeptide (Lys-Gly) (interchain with G-Cter in ubiquitin) linkage. Ser717 is modified (phosphoserine; by TTBK2). 3 disordered regions span residues 727-755 (EHESMLSLRNGAKVPERPSRSNSVATSDV), 840-931 (SWGT…GFSH), and 975-1002 (EEKKYSEKNSDDPVNPSSCPEHSPNGLK). The interval 730–963 (SMLSLRNGAK…PVSTLQQTTA (234 aa)) is interaction with KIF24. The segment covering 852–868 (SKLVNSRQTEPSVNTGR) has biased composition (polar residues). The span at 881-898 (QTSASQRSSSLPPSSRKA) shows a compositional bias: low complexity. Ser926 is modified (phosphoserine). The span at 975-985 (EEKKYSEKNSD) shows a compositional bias: basic and acidic residues. A coiled-coil region spans residues 1040–1105 (RTLAETERFF…GSVRMTLKKF (66 aa)).

In terms of assembly, interacts with CCP110, CEP97 and KIF24. Post-translationally, TTBK2-mediated phosphorylation at Ser-710 and Ser-717, promotes its ubiquitination at Lys-713 leading to proteasomal degradation, loss of MPHOSPH9 facilitates the removal of the CP110-CEP97 complex from the mother centrioles, promoting the initiation of ciliogenesis. Phosphorylated in M (mitotic) phase. Ubiquitinated at Lys-713, leading to proteasomal degradation.

The protein localises to the cytoplasm. Its subcellular location is the cytoskeleton. It localises to the microtubule organizing center. It is found in the centrosome. The protein resides in the centriole. The protein localises to the golgi apparatus membrane. In terms of biological role, negatively regulates cilia formation by recruiting the CP110-CEP97 complex (a negative regulator of ciliogenesis) at the distal end of the mother centriole in ciliary cells. At the beginning of cilia formation, MPHOSPH9 undergoes TTBK2-mediated phosphorylation and degradation via the ubiquitin-proteasome system and removes itself and the CP110-CEP97 complex from the distal end of the mother centriole, which subsequently promotes cilia formation. This Mus musculus (Mouse) protein is M-phase phosphoprotein 9 (Mphosph9).